Here is a 446-residue protein sequence, read N- to C-terminus: tRNA-2-methylthio-N(6)-dimethylallyladenosine synthase (446 aa).

In terms of domain architecture, MTTase N-terminal spans Gln3–His120. Residues Cys12, Cys49, Cys83, Cys157, Cys161, and Cys164 each coordinate [4Fe-4S] cluster. In terms of domain architecture, Radical SAM core spans Ser143–Asp375. The TRAM domain maps to Arg378–Asp442.

This sequence belongs to the methylthiotransferase family. MiaB subfamily. Monomer. [4Fe-4S] cluster is required as a cofactor.

The protein localises to the cytoplasm. The enzyme catalyses N(6)-dimethylallyladenosine(37) in tRNA + (sulfur carrier)-SH + AH2 + 2 S-adenosyl-L-methionine = 2-methylsulfanyl-N(6)-dimethylallyladenosine(37) in tRNA + (sulfur carrier)-H + 5'-deoxyadenosine + L-methionine + A + S-adenosyl-L-homocysteine + 2 H(+). Its function is as follows. Catalyzes the methylthiolation of N6-(dimethylallyl)adenosine (i(6)A), leading to the formation of 2-methylthio-N6-(dimethylallyl)adenosine (ms(2)i(6)A) at position 37 in tRNAs that read codons beginning with uridine. This is tRNA-2-methylthio-N(6)-dimethylallyladenosine synthase from Hahella chejuensis (strain KCTC 2396).